Consider the following 304-residue polypeptide: Aspartate carbamoyltransferase catalytic subunit (304 aa).

The carbamoyl phosphate site is built by R53 and T54. K82 is a binding site for L-aspartate. Carbamoyl phosphate contacts are provided by R103, H131, and Q134. Residues R163 and R224 each contribute to the L-aspartate site. Carbamoyl phosphate-binding residues include L263 and P264.

The protein belongs to the aspartate/ornithine carbamoyltransferase superfamily. ATCase family. In terms of assembly, heterooligomer of catalytic and regulatory chains.

The enzyme catalyses carbamoyl phosphate + L-aspartate = N-carbamoyl-L-aspartate + phosphate + H(+). It participates in pyrimidine metabolism; UMP biosynthesis via de novo pathway; (S)-dihydroorotate from bicarbonate: step 2/3. Its function is as follows. Catalyzes the condensation of carbamoyl phosphate and aspartate to form carbamoyl aspartate and inorganic phosphate, the committed step in the de novo pyrimidine nucleotide biosynthesis pathway. The polypeptide is Aspartate carbamoyltransferase catalytic subunit (Haloarcula marismortui (strain ATCC 43049 / DSM 3752 / JCM 8966 / VKM B-1809) (Halobacterium marismortui)).